Reading from the N-terminus, the 528-residue chain is Capsule biosynthesis protein CapD proenzyme (528 aa).

The N-terminal stretch at 1-26 (MNSFKWGKKIILFCLIVSLMGGIGVS) is a signal peptide. Threonine 352 serves as the catalytic Nucleophile. Residues threonine 352, 429-432 (GGNR), and arginine 520 each bind poly-gamma-D-glutamate.

The protein belongs to the gamma-glutamyltransferase family. As to quaternary structure, this enzyme consists of two polypeptide chains, which are synthesized in precursor form from a single polypeptide. Cleaved by autocatalysis into a large and a small subunit.

The protein operates within capsule biogenesis; capsule polysaccharide biosynthesis. In terms of biological role, transpeptidase that cleaves the poly-gamma-D-glutamate capsule and catalyzes the formation of an amide bond with the side-chain amino group of meso-diaminopimelic acid (m-DAP) in the peptidoglycan scaffold. Degradation of the high-molecular weight capsule (H-capsule) to the lower-molecular weight capsule (L-capsule), which is released from the bacterial cell surface. The production of L-capsule is essential to mediate escape from host defenses. In Bacillus anthracis, this protein is Capsule biosynthesis protein CapD proenzyme (capD).